The primary structure comprises 350 residues: Phenylalanine--tRNA ligase alpha subunit (350 aa).

A Mg(2+)-binding site is contributed by glutamate 271.

This sequence belongs to the class-II aminoacyl-tRNA synthetase family. Phe-tRNA synthetase alpha subunit type 1 subfamily. Tetramer of two alpha and two beta subunits. It depends on Mg(2+) as a cofactor.

It is found in the cytoplasm. The enzyme catalyses tRNA(Phe) + L-phenylalanine + ATP = L-phenylalanyl-tRNA(Phe) + AMP + diphosphate + H(+). This Verminephrobacter eiseniae (strain EF01-2) protein is Phenylalanine--tRNA ligase alpha subunit.